We begin with the raw amino-acid sequence, 293 residues long: Protease HtpX (293 aa).

The next 2 helical transmembrane spans lie at 4–24 and 34–54; these read IALF…VLSL and GLMI…LLMS. His-139 is a binding site for Zn(2+). Glu-140 is an active-site residue. Position 143 (His-143) interacts with Zn(2+). Helical transmembrane passes span 158 to 178 and 193 to 213; these read VVNT…AGFM and LIYF…ASII. Zn(2+) is bound at residue Glu-222.

This sequence belongs to the peptidase M48B family. The cofactor is Zn(2+).

The protein resides in the cell inner membrane. The polypeptide is Protease HtpX (Escherichia coli (strain ATCC 8739 / DSM 1576 / NBRC 3972 / NCIMB 8545 / WDCM 00012 / Crooks)).